Here is a 264-residue protein sequence, read N- to C-terminus: Thymidylate synthase (264 aa).

Residue Arg-21 coordinates dUMP. Residue His-51 participates in (6R)-5,10-methylene-5,6,7,8-tetrahydrofolate binding. 126–127 (RR) provides a ligand contact to dUMP. Catalysis depends on Cys-146, which acts as the Nucleophile. DUMP is bound by residues 166–169 (RSAD), Asn-177, and 207–209 (HLY). Asp-169 contacts (6R)-5,10-methylene-5,6,7,8-tetrahydrofolate. Position 263 (Ala-263) interacts with (6R)-5,10-methylene-5,6,7,8-tetrahydrofolate.

Belongs to the thymidylate synthase family. Bacterial-type ThyA subfamily. Homodimer.

The protein resides in the cytoplasm. It catalyses the reaction dUMP + (6R)-5,10-methylene-5,6,7,8-tetrahydrofolate = 7,8-dihydrofolate + dTMP. It functions in the pathway pyrimidine metabolism; dTTP biosynthesis. Catalyzes the reductive methylation of 2'-deoxyuridine-5'-monophosphate (dUMP) to 2'-deoxythymidine-5'-monophosphate (dTMP) while utilizing 5,10-methylenetetrahydrofolate (mTHF) as the methyl donor and reductant in the reaction, yielding dihydrofolate (DHF) as a by-product. This enzymatic reaction provides an intracellular de novo source of dTMP, an essential precursor for DNA biosynthesis. This chain is Thymidylate synthase, found in Bdellovibrio bacteriovorus (strain ATCC 15356 / DSM 50701 / NCIMB 9529 / HD100).